A 139-amino-acid chain; its full sequence is Transcription antitermination protein NusB (139 aa).

This sequence belongs to the NusB family.

Functionally, involved in transcription antitermination. Required for transcription of ribosomal RNA (rRNA) genes. Binds specifically to the boxA antiterminator sequence of the ribosomal RNA (rrn) operons. This Sodalis glossinidius (strain morsitans) protein is Transcription antitermination protein NusB.